Consider the following 138-residue polypeptide: Cysteine desulfuration protein SufE (138 aa).

The active-site Cysteine persulfide intermediate is cysteine 51.

This sequence belongs to the SufE family. Homodimer. Interacts with SufS.

The protein localises to the cytoplasm. The protein operates within cofactor biosynthesis; iron-sulfur cluster biosynthesis. In terms of biological role, participates in cysteine desulfuration mediated by SufS. Cysteine desulfuration mobilizes sulfur from L-cysteine to yield L-alanine and constitutes an essential step in sulfur metabolism for biosynthesis of a variety of sulfur-containing biomolecules. Functions as a sulfur acceptor for SufS, by mediating the direct transfer of the sulfur atom from the S-sulfanylcysteine of SufS, an intermediate product of cysteine desulfuration process. The polypeptide is Cysteine desulfuration protein SufE (Cronobacter sakazakii (strain ATCC BAA-894) (Enterobacter sakazakii)).